A 335-amino-acid polypeptide reads, in one-letter code: Phosphatidylglycerol--prolipoprotein diacylglyceryl transferase (335 aa).

3 consecutive transmembrane segments (helical) span residues 31 to 51, 67 to 87, and 100 to 120; these read IYWY…TYSL, YIFL…LAIG, and LAIQ…FPLI. R163 contributes to the a 1,2-diacyl-sn-glycero-3-phospho-(1'-sn-glycerol) binding site. 3 consecutive transmembrane segments (helical) span residues 213 to 233, 235 to 255, and 277 to 297; these read PLFL…YFGL, YIKQ…YGVI, and SLLL…APIL.

This sequence belongs to the Lgt family.

Its subcellular location is the cell membrane. The enzyme catalyses L-cysteinyl-[prolipoprotein] + a 1,2-diacyl-sn-glycero-3-phospho-(1'-sn-glycerol) = an S-1,2-diacyl-sn-glyceryl-L-cysteinyl-[prolipoprotein] + sn-glycerol 1-phosphate + H(+). It functions in the pathway protein modification; lipoprotein biosynthesis (diacylglyceryl transfer). Functionally, catalyzes the transfer of the diacylglyceryl group from phosphatidylglycerol to the sulfhydryl group of the N-terminal cysteine of a prolipoprotein, the first step in the formation of mature lipoproteins. This is Phosphatidylglycerol--prolipoprotein diacylglyceryl transferase from Ureaplasma urealyticum serovar 10 (strain ATCC 33699 / Western).